We begin with the raw amino-acid sequence, 349 residues long: Heat-inducible transcription repressor HrcA (349 aa).

The protein belongs to the HrcA family.

Negative regulator of class I heat shock genes (grpE-dnaK-dnaJ and groELS operons). Prevents heat-shock induction of these operons. In Mycoplasmoides gallisepticum (strain R(low / passage 15 / clone 2)) (Mycoplasma gallisepticum), this protein is Heat-inducible transcription repressor HrcA.